Reading from the N-terminus, the 663-residue chain is Transketolase 2 (663 aa).

Position 25 (H25) interacts with substrate. Thiamine diphosphate contacts are provided by residues H65 and 113–115 (GPL). Residue D154 participates in Mg(2+) binding. G155 and N184 together coordinate thiamine diphosphate. The Mg(2+) site is built by N184 and I186. Residues H259, R356, and S383 each coordinate substrate. A thiamine diphosphate-binding site is contributed by H259. E410 (proton donor) is an active-site residue. Thiamine diphosphate is bound at residue F436. Residues H460, D468, and R519 each coordinate substrate.

Belongs to the transketolase family. In terms of assembly, homodimer. The cofactor is Mg(2+). Requires Ca(2+) as cofactor. Mn(2+) serves as cofactor. Co(2+) is required as a cofactor. It depends on thiamine diphosphate as a cofactor.

The enzyme catalyses D-sedoheptulose 7-phosphate + D-glyceraldehyde 3-phosphate = aldehydo-D-ribose 5-phosphate + D-xylulose 5-phosphate. Functionally, catalyzes the transfer of a two-carbon ketol group from a ketose donor to an aldose acceptor, via a covalent intermediate with the cofactor thiamine pyrophosphate. This is Transketolase 2 (tkt2) from Vibrio parahaemolyticus serotype O3:K6 (strain RIMD 2210633).